The following is a 624-amino-acid chain: Ubiquilin-2 (624 aa).

2 disordered regions span residues 1 to 32 and 106 to 141; these read MAEN…EPKI and NRPQ…TNSN. Residue alanine 2 is modified to N-acetylalanine. Residues 15-32 show a composition bias toward low complexity; that stretch reads RGPAAAQGSAAAPAEPKI. The Ubiquitin-like domain occupies 33–107; that stretch reads IKVTVKTPKE…VHLVIKSQNR (75 aa). The span at 106 to 115 shows a compositional bias: polar residues; it reads NRPQGQSTQP. The span at 116 to 141 shows a compositional bias: low complexity; it reads SNAAGTNTTSASTPRSNSTPISTNSN. STI1 domains lie at 178-206 and 208-247; these read SPEM…QLIM and NPQM…MQEM. The segment at 287 to 349 is disordered; it reads FGGNPFASVG…SGSGNSSSNA (63 aa). A compositionally biased stretch (low complexity) spans 294–304; sequence SVGSSSSSGEG. Positions 316–325 are enriched in pro residues; it reads LPNPWAPPPA. Over residues 326–349 the composition is skewed to low complexity; the sequence is TQSSATTSTTTSTGSGSGNSSSNA. 2 STI1 domains span residues 379–426 and 430–462; these read NPQL…QEQM and LPAF…QQGL. Repeat copies occupy residues 491–493, 494–496, 497–499, 500–502, 503–505, 506–508, 509–511, 512–514, 515–517, 518–520, 521–523, and 524–526. The tract at residues 491-526 is 12 X 3 AA tandem repeats of P-X-X; the sequence is PVGPVTPIGPIGPIVPFTPIGPIGPIGPTGPAAPPG. Residues 512-556 are disordered; that stretch reads PIGPIGPTGPAAPPGSTGSGGPTGPTVSSAAPSETTSPTSESGPN. The span at 535–553 shows a compositional bias: low complexity; sequence GPTVSSAAPSETTSPTSES. One can recognise a UBA domain in the interval 581–621; the sequence is RFQQQLEQLNAMGFLNREANLQALIATGGDINAAIERLLGS.

In terms of assembly, homodimer. Forms heterodimer with UBQLN1. Binds UBE3A and BTRC. Interacts with the 19S proteasome subunit. Interacts with C9orf72. Interacts with HNRNPA1 and HNRNPU. Found in a complex with UBQLN1 and MAP1LC3A/B/C. Interacts with EPS15, EPN1 and EPN2. Interacts with HERPUD1. Interacts with RAD23A. Interacts with TARDBP. Interacts (via C-terminus) with FAF2 (via N-terminus). Interacts with UBQLN4. Binds CD47. In terms of processing, degraded during macroautophagy.

It localises to the cytoplasm. Its subcellular location is the nucleus. The protein localises to the membrane. It is found in the cytoplasmic vesicle. The protein resides in the autophagosome. Plays an important role in the regulation of different protein degradation mechanisms and pathways including ubiquitin-proteasome system (UPS), autophagy and the endoplasmic reticulum-associated protein degradation (ERAD) pathway. Mediates the proteasomal targeting of misfolded or accumulated proteins for degradation by binding (via UBA domain) to their polyubiquitin chains and by interacting (via ubiquitin-like domain) with the subunits of the proteasome. Plays a role in the ERAD pathway via its interaction with ER-localized proteins FAF2/UBXD8 and HERPUD1 and may form a link between the polyubiquitinated ERAD substrates and the proteasome. Involved in the regulation of macroautophagy and autophagosome formation; required for maturation of autophagy-related protein LC3 from the cytosolic form LC3-I to the membrane-bound form LC3-II and may assist in the maturation of autophagosomes to autolysosomes by mediating autophagosome-lysosome fusion. Negatively regulates the endocytosis of GPCR receptors: AVPR2 and ADRB2, by specifically reducing the rate at which receptor-arrestin complexes concentrate in clathrin-coated pits (CCPs). The sequence is that of Ubiquilin-2 (UBQLN2) from Homo sapiens (Human).